A 419-amino-acid polypeptide reads, in one-letter code: S-adenosylmethionine synthase (419 aa).

His-15 provides a ligand contact to ATP. Position 17 (Asp-17) interacts with Mg(2+). Residue Glu-43 participates in K(+) binding. Residues Glu-56 and Gln-100 each contribute to the L-methionine site. The tract at residues 100 to 110 (QSPDIAQGVNE) is flexible loop. ATP is bound by residues 171 to 173 (DGK), 248 to 249 (KF), Asp-257, 263 to 264 (RK), Ala-280, and Lys-284. Asp-257 provides a ligand contact to L-methionine. Lys-288 is a binding site for L-methionine.

This sequence belongs to the AdoMet synthase family. Homotetramer; dimer of dimers. Requires Mg(2+) as cofactor. K(+) is required as a cofactor.

It localises to the cytoplasm. The enzyme catalyses L-methionine + ATP + H2O = S-adenosyl-L-methionine + phosphate + diphosphate. It participates in amino-acid biosynthesis; S-adenosyl-L-methionine biosynthesis; S-adenosyl-L-methionine from L-methionine: step 1/1. Catalyzes the formation of S-adenosylmethionine (AdoMet) from methionine and ATP. The overall synthetic reaction is composed of two sequential steps, AdoMet formation and the subsequent tripolyphosphate hydrolysis which occurs prior to release of AdoMet from the enzyme. The sequence is that of S-adenosylmethionine synthase from Prochlorococcus marinus (strain MIT 9313).